A 161-amino-acid polypeptide reads, in one-letter code: Insulin-like growth factor 1, juvenile form (161 aa).

Residues 45–73 form a b region; that stretch reads GPETLCGAELVDTLQFVCGDRGFYFSKPT. 3 cysteine pairs are disulfide-bonded: Cys-50–Cys-92, Cys-62–Cys-105, and Cys-91–Cys-96. Positions 74–85 are c; the sequence is GYGPSSRRSHNR. The segment at 86–106 is a; sequence GIVDECCFQSCELRRLEMYCA. The segment at 107–114 is d; that stretch reads PVKPGKTP. Residues 111-161 are disordered; it reads GKTPRSVRAQRHTDSPRTAKKPLPGQSHSSYKEVHQKNSSRGNTGGRNYRI. A propeptide spans 115–161 (e peptide); the sequence is RSVRAQRHTDSPRTAKKPLPGQSHSSYKEVHQKNSSRGNTGGRNYRI.

This sequence belongs to the insulin family.

The protein localises to the secreted. Functionally, the insulin-like growth factors, isolated from plasma, are structurally and functionally related to insulin but have a much higher growth-promoting activity. Acts as a ligand for IGF1R. Binds to the alpha subunit of IGF1R, leading to the activation of the intrinsic tyrosine kinase activity which autophosphorylates tyrosine residues in the beta subunit thus initiatiating a cascade of down-stream signaling events leading to activation of the PI3K-AKT/PKB and the Ras-MAPK pathways. Binds to integrins. Its binding to integrins and subsequent ternary complex formation with integrins and IGFR1 are essential for IGF1 signaling. The polypeptide is Insulin-like growth factor 1, juvenile form (Cyprinus carpio (Common carp)).